The following is a 524-amino-acid chain: MHSLDEPLDLKLSITKLRAAREKRERTLGVVRPRALHRELGLVDDSPTPGSPGSPPSGFLLNSKFPEKVEGRFSAAPLVDLSLSPPSGLDSPNGSSSLSPERQGNGDLPPVPSASDFQPLRYLDGVPSSFQFFLPLGSGGALHLPASSFLTPPKDKCLSPDLPLPKQLVCRWAKCNQLFELLQDLVDHVNDYHVKPEKDAGYCCHWEGCARHGRGFNARYKMLIHIRTHTNEKPHRCPTCSKSFSRLENLKIHNRSHTGEKPYVCPYEGCNKRYSNSSDRFKHTRTHYVDKPYYCKMPGCHKRYTDPSSLRKHIKAHGHFVSHEQQELLQLRPPPKPPLPAPDGGPYVSGAQIIIPNPAALFGGPGLPGLPLPLAPGPLDLSALACGNGGGSGGGGGMGPGLPGPVLPLNLAKNPLLPSPFGAGGLGLPVVSLLAGAAGGKAEGEKGRGSVPTRALGMEGHKTPLERTESSCSRPSPDGLPLLPGTVLDLSTGVNSAASSPEALAPGWVVIPPGSVLLKPAVVN.

Residues 35–174 form an interaction with CTNND1 region; sequence ALHRELGLVD…PKQLVCRWAK (140 aa). 2 disordered regions span residues 39–62 and 84–114; these read ELGL…FLLN and SPPS…VPSA. Residues 71–137 form a transcription activation region; the sequence is GRFSAAPLVD…SSFQFFLPLG (67 aa). Over residues 84-100 the composition is skewed to low complexity; the sequence is SPPSGLDSPNGSSSLSP. The transcription repression stretch occupies residues 148 to 171; it reads SFLTPPKDKCLSPDLPLPKQLVCR. The segment at 168 to 193 adopts a C2H2-type 1 zinc-finger fold; that stretch reads LVCRWAKCNQLFELLQDLVDHVNDYH. The segment at 202-229 adopts a C2H2-type 2; atypical zinc-finger fold; it reads YCCHWEGCARHGRGFNARYKMLIHIRTH. C2H2-type zinc fingers lie at residues 235–257, 263–287, and 293–317; these read HRCP…NRSH, YVCP…TRTH, and YYCK…IKAH. The segment at 439 to 480 is disordered; that stretch reads GGKAEGEKGRGSVPTRALGMEGHKTPLERTESSCSRPSPDGL. The segment covering 459–469 has biased composition (basic and acidic residues); it reads EGHKTPLERTE.

This sequence belongs to the GLI C2H2-type zinc-finger protein family. Interacts with CTBP1 and HDAC3. Interacts with CTNNB1. Interacts with SUFU. Interacts with CTNND1. C-terminus cleavage is induced by interaction with CTNND1 and enhanced by Src tyrosine kinase. Expressed at high levels in kidney and at low levels in heart, lung and placenta. Expressed in colon.

The protein localises to the nucleus speckle. Its subcellular location is the cytoplasm. Functionally, can act either as a transcriptional repressor or as a transcriptional activator, depending on the cell context. Acts as a repressor of the Hedgehog signaling pathway. Represses the Hedgehog-dependent expression of Wnt4. Necessary to maintain the differentiated epithelial phenotype in renal cells through the inhibition of SNAI1, which itself induces the epithelial-to-mesenchymal transition. Represses transcriptional activation mediated by CTNNB1 in the Wnt signaling pathway. May act by recruiting the corepressors CTBP1 and HDAC3. May be involved in neuron differentiation. The chain is Zinc finger protein GLIS2 (GLIS2) from Homo sapiens (Human).